The primary structure comprises 492 residues: MEFGVLLLLTLTVGFLLFLVSQSQPKTHGHLPPGPRPLPFLGNLLQMNRRGFLNSFMQLQEKYGDVFTVHLGPRPVVILCGTDTIREALVDQAEAFSGRGTVAVLHPVVQGYGVIFATGERWKTLRRFSLVTMKEFGMGKRSVDERIKEEAQCLVEELKKYKGAPLNPTFLFQSIAANTICSIVFGERFDYKDHQFLHLLDLVYKTSVLMGSLSSQVFELYSGFLKYFPGAHKQIFKNLQEMLNYIGHIVEKHRATLDPSAPRDFIDTYLLRMEKEKSNHHTEFNHQNLVISVLSLFFAGTETTSTTLRCTFLIMLKYPHVAEKVQKEIDQVIGSHRLPTPDDRTKMPYTDAVIHEIQRFADLTPIGLPHRVTKDTVFRGYLLPKNTEVYPILSSALHDPRYFEQPDTFNPEHFLDANGALKKSEAFLPFSTGKRICLGEGIARNELFIFFTAILQNFTLASPVAPEDIDLTPINIGVGKIPSPYQINFLSR.

Position 129 is a phosphoserine (Ser-129). Cys-437 lines the heme pocket.

This sequence belongs to the cytochrome P450 family. The cofactor is heme. In terms of tissue distribution, preputial gland, but not in liver.

Its subcellular location is the endoplasmic reticulum membrane. It localises to the microsome membrane. The enzyme catalyses an organic molecule + reduced [NADPH--hemoprotein reductase] + O2 = an alcohol + oxidized [NADPH--hemoprotein reductase] + H2O + H(+). Its function is as follows. Cytochromes P450 are a group of heme-thiolate monooxygenases. In liver microsomes, this enzyme is involved in an NADPH-dependent electron transport pathway. This isozyme seems responsible for metabolism of 2,2',4,4',5,5'-hexachlorobiphenyl. The chain is Cytochrome P450 2B12 (Cyp2b12) from Rattus norvegicus (Rat).